A 150-amino-acid chain; its full sequence is Cytochrome c oxidase subunit 5A, mitochondrial (150 aa).

Residues 1 to 41 (MLGAALRRCAVAATTWAGPRGLLHSSRTPGPAAAIQSVRCY) constitute a mitochondrion transit peptide. An SIFI-degron motif is present at residues 2–17 (LGAALRRCAVAATTWA). An N6-acetyllysine mark is found at Lys-87 and Lys-113. Phosphothreonine is present on Thr-141.

It belongs to the cytochrome c oxidase subunit 5A family. In terms of assembly, component of the cytochrome c oxidase (complex IV, CIV), a multisubunit enzyme composed of 14 subunits. The complex is composed of a catalytic core of 3 subunits MT-CO1, MT-CO2 and MT-CO3, encoded in the mitochondrial DNA, and 11 supernumerary subunits COX4I, COX5A, COX5B, COX6A, COX6B, COX6C, COX7A, COX7B, COX7C, COX8 and NDUFA4, which are encoded in the nuclear genome. The complex exists as a monomer or a dimer and forms supercomplexes (SCs) in the inner mitochondrial membrane with NADH-ubiquinone oxidoreductase (complex I, CI) and ubiquinol-cytochrome c oxidoreductase (cytochrome b-c1 complex, complex III, CIII), resulting in different assemblies (supercomplex SCI(1)III(2)IV(1) and megacomplex MCI(2)III(2)IV(2)). Interacts with AFG1L. Interacts with RAB5IF. In response to mitochondrial stress, the precursor protein is ubiquitinated by the SIFI complex in the cytoplasm before mitochondrial import, leading to its degradation. Within the SIFI complex, UBR4 initiates ubiquitin chain that are further elongated or branched by KCMF1.

Its subcellular location is the mitochondrion inner membrane. It participates in energy metabolism; oxidative phosphorylation. Functionally, component of the cytochrome c oxidase, the last enzyme in the mitochondrial electron transport chain which drives oxidative phosphorylation. The respiratory chain contains 3 multisubunit complexes succinate dehydrogenase (complex II, CII), ubiquinol-cytochrome c oxidoreductase (cytochrome b-c1 complex, complex III, CIII) and cytochrome c oxidase (complex IV, CIV), that cooperate to transfer electrons derived from NADH and succinate to molecular oxygen, creating an electrochemical gradient over the inner membrane that drives transmembrane transport and the ATP synthase. Cytochrome c oxidase is the component of the respiratory chain that catalyzes the reduction of oxygen to water. Electrons originating from reduced cytochrome c in the intermembrane space (IMS) are transferred via the dinuclear copper A center (CU(A)) of subunit 2 and heme A of subunit 1 to the active site in subunit 1, a binuclear center (BNC) formed by heme A3 and copper B (CU(B)). The BNC reduces molecular oxygen to 2 water molecules using 4 electrons from cytochrome c in the IMS and 4 protons from the mitochondrial matrix. The chain is Cytochrome c oxidase subunit 5A, mitochondrial (COX5A) from Colobus guereza (Mantled guereza).